A 390-amino-acid polypeptide reads, in one-letter code: Alkanesulfonate monooxygenase (390 aa).

This sequence belongs to the SsuD family.

It carries out the reaction an alkanesulfonate + FMNH2 + O2 = an aldehyde + FMN + sulfite + H2O + 2 H(+). Functionally, catalyzes the desulfonation of aliphatic sulfonates. In Cupriavidus taiwanensis (strain DSM 17343 / BCRC 17206 / CCUG 44338 / CIP 107171 / LMG 19424 / R1) (Ralstonia taiwanensis (strain LMG 19424)), this protein is Alkanesulfonate monooxygenase.